The following is a 1488-amino-acid chain: DNA polymerase alpha catalytic subunit (1488 aa).

3 disordered regions span residues 1 to 22, 79 to 124, and 236 to 325; these read MSES…GRFA, LRDF…TGKA, and FFSS…ESED. A compositionally biased stretch (acidic residues) spans 83–93; that stretch reads FEDEDEYSDGE. A Nuclear localization signal motif is present at residues 96–103; it reads RKDSKKKK. Residues 99–113 show a composition bias toward basic residues; that stretch reads SKKKKGVAPNSKKRP. Phosphoserine is present on serine 239. A compositionally biased stretch (basic and acidic residues) spans 242–258; the sequence is IKKEPMPEKTPAKKATE. Over residues 260-278 the composition is skewed to acidic residues; sequence PFSDNEMDFSCLDDDENQF. Residues serine 262 and serine 269 each carry the phosphoserine modification. Polar residues predominate over residues 286 to 303; sequence TEKVSQTKTAAEKTSQSK. The span at 304–325 shows a compositional bias: basic and acidic residues; sequence VAEKSAPKKETTGSPKESESED. Threonine 314 carries the post-translational modification Phosphothreonine. Serine 317 is modified (phosphoserine). A contains conserved residues essential for 3' -&gt; 5' exonuclease activities region spans residues 638–758; the sequence is DSERALLSWF…DLLEMYEKGE (121 aa). 2 DNA-binding regions span residues 675-734 and 1255-1380; these read QIVA…CKQV and PTKF…RKKS. Residues cysteine 1296, cysteine 1299, cysteine 1324, cysteine 1329, cysteine 1362, cysteine 1367, cysteine 1385, and cysteine 1388 each coordinate Zn(2+). A CysA-type zinc finger spans residues 1296-1327; it reads CVTCKTEQLMASAYRPGPSNSHIAVLQQCAKS. A CysB motif motif is present at residues 1362–1388; the sequence is CDHPDCNFNTRTHSLRKKSHRPLCQKC.

Belongs to the DNA polymerase type-B family. Component of the alpha DNA polymerase complex (also known as the alpha DNA polymerase-primase complex) consisting of four subunits: the catalytic subunit PolA1, the regulatory subunit PolA2, and the primase complex subunits Prim1 and Prim2 respectively. PolA1 associates with the DNA primase complex before association with PolA2. Interacts with Dpit47; the interaction inhibits the activity of the DNA polymerase and occurs only in proliferating cells but not in quiescent cells. Post-translationally, in embryos, a cleaved form of 130 kDa is produced up to cycle 14 and then disappears. As to expression, expressed in embryos (at protein level).

The protein localises to the nucleus. The catalysed reaction is DNA(n) + a 2'-deoxyribonucleoside 5'-triphosphate = DNA(n+1) + diphosphate. With respect to regulation, inhibited by N2-(p-n-butylphenyl) deoxyguanosine 5'-triphosphate and N2-(p-n-butylphenyl) deoxyadenosine 5'-triphosphate. DNA synthesis is not inhibited by fungal toxin alpha-amaitin. The 3'-5' exonuclease activity is inhibited by 10mM dGMP. In terms of biological role, catalytic subunit of the DNA polymerase alpha complex (also known as the alpha DNA polymerase-primase complex) which plays an essential role in the initiation of DNA synthesis. During the S phase of the cell cycle, the DNA polymerase alpha complex (composed of a catalytic subunit PolA1, an accessory subunit PolA2 and two primase subunits, the catalytic subunit Prim1 and the regulatory subunit Prim2) is recruited to DNA at the replicative forks. The primase subunit of the polymerase alpha complex initiates DNA synthesis by oligomerising short RNA primers on both leading and lagging strands. These primers are initially extended by the polymerase alpha catalytic subunit and subsequently transferred to polymerase delta and polymerase epsilon for processive synthesis on the lagging and leading strand, respectively. In addition to polymerase activity, exhibits 3' to 5' exonuclease activity. The chain is DNA polymerase alpha catalytic subunit from Drosophila melanogaster (Fruit fly).